Consider the following 104-residue polypeptide: Viral histone-like protein (104 aa).

This sequence belongs to the bacterial histone-like protein family. Homodimer.

The protein resides in the virion. Its activity is regulated as follows. Stilbene derivatives SD1 and SD4 disrupt the binding between pA104R and DNA and inhibit the viral replication in primary alveolar macrophages. DNA-binding protein that plays a critical role in nucleoid compaction, genome replication and DNA replication and transcription. Binds to both ssDNA and dsDNA with a binding site covering about 15 nucleotides. Displays DNA-supercoiling activity only when associated with the viral DNA topoisomerase 2. In African swine fever virus (strain Badajoz 1971 Vero-adapted) (Ba71V), this protein is Viral histone-like protein.